Here is a 57-residue protein sequence, read N- to C-terminus: Large ribosomal subunit protein bL32 (57 aa).

The protein belongs to the bacterial ribosomal protein bL32 family.

The sequence is that of Large ribosomal subunit protein bL32 from Streptomyces griseus subsp. griseus (strain JCM 4626 / CBS 651.72 / NBRC 13350 / KCC S-0626 / ISP 5235).